A 468-amino-acid chain; its full sequence is 5-carboxymethyl-2-hydroxymuconate semialdehyde dehydrogenase (468 aa).

The active site involves Glu-244. Cys-278 functions as the Nucleophile in the catalytic mechanism.

Belongs to the aldehyde dehydrogenase family. As to quaternary structure, homodimer.

It catalyses the reaction 2-hydroxy-5-carboxymethylmuconate semialdehyde + NAD(+) + H2O = (2E,4Z)-5-hydroxypenta-2,4-diene-1,2,5-tricarboxylate + NADH + 2 H(+). The protein operates within aromatic compound metabolism; 4-hydroxyphenylacetate degradation; pyruvate and succinate semialdehyde from 4-hydroxyphenylacetate: step 3/7. Its function is as follows. Catalyzes the conversion of 5-carboxymethyl-2-hydroxy-muconic semialdehyde (CHMS) into 5-carboxymethyl-2-hydroxy-muconic acid (CHM or (2E,4Z)-5-hydroxypenta-2,4-diene-1,2,5-tricarboxylate). Is involved in a meta-cleavage pathway for the catabolism of 4-hydroxyphenylacetate (4-HPA) via homoprotocatechuate (HPC or 3,4-dihydroxyphenylacetate). This chain is 5-carboxymethyl-2-hydroxymuconate semialdehyde dehydrogenase, found in Escherichia coli.